The primary structure comprises 64 residues: uncharacterized protein (64 aa).

This sequence to P.abyssi PAB3148.

This is an uncharacterized protein from Archaeoglobus fulgidus (strain ATCC 49558 / DSM 4304 / JCM 9628 / NBRC 100126 / VC-16).